A 128-amino-acid chain; its full sequence is DNA-directed RNA polymerase subunit omega (128 aa).

The tract at residues 87-106 (ARSSQAAPKSAPGQEIGKSF) is disordered.

This sequence belongs to the RNA polymerase subunit omega family. As to quaternary structure, the RNAP catalytic core consists of 2 alpha, 1 beta, 1 beta' and 1 omega subunit. When a sigma factor is associated with the core the holoenzyme is formed, which can initiate transcription.

It catalyses the reaction RNA(n) + a ribonucleoside 5'-triphosphate = RNA(n+1) + diphosphate. Its function is as follows. Promotes RNA polymerase assembly. Latches the N- and C-terminal regions of the beta' subunit thereby facilitating its interaction with the beta and alpha subunits. The protein is DNA-directed RNA polymerase subunit omega of Anaplasma marginale (strain Florida).